A 659-amino-acid polypeptide reads, in one-letter code: Interferon-induced GTP-binding protein Mx2 (659 aa).

The 274-residue stretch at 65–338 folds into the Dynamin-type G domain; sequence DLALPAIAVI…LISHICKSLP (274 aa). Residues 75 to 82 form a G1 motif region; the sequence is GDQSSGKS. Residue 75–82 participates in GTP binding; the sequence is GDQSSGKS. The tract at residues 100–102 is G2 motif; the sequence is VTR. Residues 176–179 form a G3 motif region; the sequence is DLPG. GTP contacts are provided by residues 176–180 and 245–248; these read DLPGI and TKPD. The tract at residues 245–248 is G4 motif; the sequence is TKPD. Positions 277–280 are G5 motif; sequence KCRG. Positions 547–567 are disordered; it reads EAEEEERKHGKSRSSQSKNLQ. Residues 571 to 659 enclose the GED domain; the sequence is MDEIFQHLNA…AQRRLAKFPG (89 aa).

Belongs to the TRAFAC class dynamin-like GTPase superfamily. Dynamin/Fzo/YdjA family.

It localises to the cytoplasm. Its function is as follows. Interferon-induced dynamin-like GTPase with antiviral activity against vesicular stomatitis virus (VSV). This is Interferon-induced GTP-binding protein Mx2 (Mx2) from Rattus norvegicus (Rat).